A 239-amino-acid polypeptide reads, in one-letter code: Serine protease SplC (239 aa).

The N-terminal stretch at Met1–Ala36 is a signal peptide. Catalysis depends on charge relay system residues His75, Asp113, and Ser193.

This sequence belongs to the peptidase S1B family.

The protein resides in the secreted. This Staphylococcus aureus (strain USA300 / TCH1516) protein is Serine protease SplC (splC).